The sequence spans 149 residues: Transcriptional repressor NrdR (149 aa).

Residues 3-34 (CPFCSHSETQVVETRISEDGDSIRRRRQCASC) fold into a zinc finger. Positions 49-139 (PAIVKKDGRR…VYRSFEDIDE (91 aa)) constitute an ATP-cone domain.

This sequence belongs to the NrdR family. Zn(2+) serves as cofactor.

Negatively regulates transcription of bacterial ribonucleotide reductase nrd genes and operons by binding to NrdR-boxes. This chain is Transcriptional repressor NrdR, found in Albidiferax ferrireducens (strain ATCC BAA-621 / DSM 15236 / T118) (Rhodoferax ferrireducens).